The chain runs to 552 residues: HTH-type transcriptional regulator SgrR (552 aa).

Positions 163–493 are solute-binding; it reads ELKPDLAHHW…DDLDTDAQQW (331 aa).

In terms of biological role, activates the small RNA gene sgrS under glucose-phosphate stress conditions as well as yfdZ. Represses its own transcription under both stress and non-stress conditions. Might act as a sensor of the intracellular accumulation of phosphoglucose by binding these molecules in its C-terminal solute-binding domain. The sequence is that of HTH-type transcriptional regulator SgrR from Pectobacterium atrosepticum (strain SCRI 1043 / ATCC BAA-672) (Erwinia carotovora subsp. atroseptica).